Reading from the N-terminus, the 241-residue chain is Probable transcriptional regulator PhnF (241 aa).

The HTH gntR-type domain occupies 11 to 78; the sequence is PTRYQEIAAK…QGVGVLVLMR (68 aa). Positions 38–57 form a DNA-binding region, H-T-H motif; the sequence is EQQLAARFEVNRHTLRRAID.

Its function is as follows. Belongs to an operon involved in alkylphosphonate uptake and C-P lyase. Exact function not known. By similarity could be a transcriptional regulator. In Escherichia coli (strain K12), this protein is Probable transcriptional regulator PhnF (phnF).